We begin with the raw amino-acid sequence, 283 residues long: Phosphatidylglycerol--prolipoprotein diacylglyceryl transferase (283 aa).

4 helical membrane-spanning segments follow: residues 17–37 (LAVR…TFLG), 56–76 (FLTW…VLFY), 92–112 (WEGG…IWLF), and 117–137 (GIGF…GLAS). Residue Arg139 coordinates a 1,2-diacyl-sn-glycero-3-phospho-(1'-sn-glycerol). Helical transmembrane passes span 194 to 214 (PSQL…VWLF), 222 to 242 (GQVA…AEFA), and 255 to 275 (GLSM…VGFV).

The protein belongs to the Lgt family.

It is found in the cell inner membrane. The catalysed reaction is L-cysteinyl-[prolipoprotein] + a 1,2-diacyl-sn-glycero-3-phospho-(1'-sn-glycerol) = an S-1,2-diacyl-sn-glyceryl-L-cysteinyl-[prolipoprotein] + sn-glycerol 1-phosphate + H(+). It participates in protein modification; lipoprotein biosynthesis (diacylglyceryl transfer). Catalyzes the transfer of the diacylglyceryl group from phosphatidylglycerol to the sulfhydryl group of the N-terminal cysteine of a prolipoprotein, the first step in the formation of mature lipoproteins. This is Phosphatidylglycerol--prolipoprotein diacylglyceryl transferase from Neisseria meningitidis serogroup C / serotype 2a (strain ATCC 700532 / DSM 15464 / FAM18).